Consider the following 502-residue polypeptide: Cytochrome P450 71A1 (502 aa).

A helical transmembrane segment spans residues 7–21; it reads LLFLAIALTFFLLKL. Residue Cys-443 coordinates heme.

Belongs to the cytochrome P450 family. The cofactor is heme. Mesocarp.

The protein resides in the microsome membrane. Its subcellular location is the endoplasmic reticulum membrane. Involved in the metabolism of compounds associated with the development of flavor in the ripening fruit process, possibly by acting as trans-cinnamic acid 4-hydrolase. In Persea americana (Avocado), this protein is Cytochrome P450 71A1 (CYP71A1).